The chain runs to 323 residues: UDP-N-acetylenolpyruvoylglucosamine reductase (323 aa).

One can recognise an FAD-binding PCMH-type domain in the interval 33 to 214; that stretch reads IGGPAEALFC…LSAVFTLTHG (182 aa). Ser-243 acts as the Proton donor in catalysis. The active site involves Glu-315.

Belongs to the MurB family. It depends on FAD as a cofactor.

Its subcellular location is the cytoplasm. It catalyses the reaction UDP-N-acetyl-alpha-D-muramate + NADP(+) = UDP-N-acetyl-3-O-(1-carboxyvinyl)-alpha-D-glucosamine + NADPH + H(+). It participates in cell wall biogenesis; peptidoglycan biosynthesis. Cell wall formation. The chain is UDP-N-acetylenolpyruvoylglucosamine reductase from Treponema denticola (strain ATCC 35405 / DSM 14222 / CIP 103919 / JCM 8153 / KCTC 15104).